A 306-amino-acid chain; its full sequence is ATP synthase F(1) complex subunit gamma, mitochondrial (306 aa).

The transit peptide at 1-17 directs the protein to the mitochondrion; the sequence is MNSASKLFVVLASPANQ.

The protein belongs to the ATPase gamma chain family. Component of the ATP synthase complex composed at least of ATP5F1A/subunit alpha, ATP5F1B/subunit beta, ATP5MC1/subunit c (homooctomer), MT-ATP6/subunit a, MT-ATP8/subunit 8, ATP5ME/subunit e, ATP5MF/subunit f, ATP5MG/subunit g, ATP5MK/subunit k, ATP5MJ/subunit j, ATP5F1C/subunit gamma, ATP5F1D/subunit delta, ATP5F1E/subunit epsilon, ATP5PF/subunit F6, ATP5PB/subunit b, ATP5PD/subunit d, ATP5PO/subunit OSCP. ATP synthase complex consists of a soluble F(1) head domain (subunits alpha(3) and beta(3)) - the catalytic core - and a membrane F(0) domain - the membrane proton channel (subunits c, a, 8, e, f, g, k and j). These two domains are linked by a central stalk (subunits gamma, delta, and epsilon) rotating inside the F1 region and a stationary peripheral stalk (subunits F6, b, d, and OSCP).

It localises to the mitochondrion inner membrane. Its function is as follows. Subunit gamma, of the mitochondrial membrane ATP synthase complex (F(1)F(0) ATP synthase or Complex V) that produces ATP from ADP in the presence of a proton gradient across the membrane which is generated by electron transport complexes of the respiratory chain. ATP synthase complex consist of a soluble F(1) head domain - the catalytic core - and a membrane F(1) domain - the membrane proton channel. These two domains are linked by a central stalk rotating inside the F(1) region and a stationary peripheral stalk. During catalysis, ATP synthesis in the catalytic domain of F(1) is coupled via a rotary mechanism of the central stalk subunits to proton translocation. In vivo, can only synthesize ATP although its ATP hydrolase activity can be activated artificially in vitro. With the central stalk subunit delta, is essential for the biogenesis of F(1) catalytic part of the ATP synthase complex namely in the formation of F1 assembly intermediate. This chain is ATP synthase F(1) complex subunit gamma, mitochondrial, found in Dictyostelium discoideum (Social amoeba).